We begin with the raw amino-acid sequence, 409 residues long: Outer membrane protein YopM (409 aa).

15 LRR repeats span residues 72–91, 92–113, 114–131, 132–153, 154–173, 174–195, 196–215, 216–237, 238–257, 258–279, 280–297, 298–317, 318–339, 340–357, and 358–379; these read QAHE…ELPP, HLES…PQSL, KSLL…DLPP, LLEY…QNSS, FLKI…DLPP, SLEF…QNLP, FLTA…DLPL, SLES…QNLP, FLTT…DLPP, SLEA…PQSL, TFLD…ELPP, NLYY…DLPP, SLEE…PPRL, ERLI…ELPQ, and NLKQ…PESV. The Ca(2+) site is built by Asn246 and Asp266. The Ca(2+) site is built by Asn307, Glu308, and Asn326.

It belongs to the LRR-containing bacterial E3 ligase family. As to quaternary structure, homotetramer forming a hollow cylinder with an inner diameter of approximately 35 angstroms.

The protein resides in the cell outer membrane. Its subcellular location is the secreted. Effector proteins function to alter host cell physiology and promote bacterial survival in host tissues. The chain is Outer membrane protein YopM (yopM) from Yersinia pestis.